The sequence spans 369 residues: Serpentine receptor class epsilon-45 (369 aa).

The next 8 membrane-spanning stretches (helical) occupy residues Met-1 to Leu-21, Phe-39 to Ile-59, Thr-67 to Ile-87, Phe-127 to Val-147, Gly-169 to Phe-191, His-195 to Val-217, Val-258 to Leu-278, and Ile-291 to Val-311.

This sequence belongs to the nematode receptor-like protein sre family.

Its subcellular location is the membrane. The protein is Serpentine receptor class epsilon-45 (sre-45) of Caenorhabditis elegans.